The following is a 52-amino-acid chain: Alpha-crystallin B chain (52 aa).

It belongs to the small heat shock protein (HSP20) family. Homodimer. Aggregates with homologous proteins, including alpha-A-crystallin and the small heat shock protein HSPB1, to form large heteromeric complexes.

May contribute to the transparency and refractive index of the lens. This chain is Alpha-crystallin B chain (CRYAB), found in Eudromia elegans (Elegant crested-tinamou).